The primary structure comprises 116 residues: MSKKRKRKYVLIVFVNTHHFMLHLGTGTLGGSGGSNVYRAIVKVDFFSFDGAGFCIIGILRGTNGLCPSNNFLGSICRSIFSIVAQMQVVPIQHEVFWSSSQRLYGSAPSLDSLFL.

2 helical membrane passes run 40–60 and 72–92; these read AIVK…IGIL and FLGS…VVPI.

The protein resides in the membrane. This is an uncharacterized protein from Saccharomyces cerevisiae (strain ATCC 204508 / S288c) (Baker's yeast).